The primary structure comprises 329 residues: Diaminopimelate epimerase (329 aa).

Substrate contacts are provided by Asn-14 and Asn-73. The active-site Proton donor is Cys-82. Residues 83 to 84, Asn-170, Asn-206, and 224 to 225 each bind substrate; these read GN and ER. The active-site Proton acceptor is Cys-233. 234-235 contributes to the substrate binding site; the sequence is GT.

Belongs to the diaminopimelate epimerase family. Homodimer.

The protein localises to the cytoplasm. It catalyses the reaction (2S,6S)-2,6-diaminopimelate = meso-2,6-diaminopimelate. Its pathway is amino-acid biosynthesis; L-lysine biosynthesis via DAP pathway; DL-2,6-diaminopimelate from LL-2,6-diaminopimelate: step 1/1. Its function is as follows. Catalyzes the stereoinversion of LL-2,6-diaminopimelate (L,L-DAP) to meso-diaminopimelate (meso-DAP), a precursor of L-lysine and an essential component of the bacterial peptidoglycan. The chain is Diaminopimelate epimerase from Listeria monocytogenes serotype 4a (strain HCC23).